The sequence spans 405 residues: Cytoplasmic tRNA 2-thiolation protein 2 (405 aa).

Belongs to the CTU2/NCS2 family.

The protein localises to the cytoplasm. It functions in the pathway tRNA modification; 5-methoxycarbonylmethyl-2-thiouridine-tRNA biosynthesis. Plays a central role in 2-thiolation of mcm(5)S(2)U at tRNA wobble positions of tRNA(Lys), tRNA(Glu) and tRNA(Gln). May act by forming a heterodimer with NCS6/CTU1 that ligates sulfur from thiocarboxylated URM1 onto the uridine of tRNAs at wobble position. The polypeptide is Cytoplasmic tRNA 2-thiolation protein 2 (Drosophila pseudoobscura pseudoobscura (Fruit fly)).